The primary structure comprises 503 residues: Arabinose import ATP-binding protein AraG 1 (503 aa).

2 consecutive ABC transporter domains span residues 5-240 and 251-497; these read LRFD…MVGR and RALG…LPQT. 37-44 serves as a coordination point for ATP; sequence GENGAGKS.

This sequence belongs to the ABC transporter superfamily. Arabinose importer (TC 3.A.1.2.2) family. The complex is composed of two ATP-binding proteins (AraG), two transmembrane proteins (AraH) and a solute-binding protein (AraF).

It localises to the cell inner membrane. It catalyses the reaction L-arabinose(out) + ATP + H2O = L-arabinose(in) + ADP + phosphate + H(+). Functionally, part of the ABC transporter complex AraFGH involved in arabinose import. Responsible for energy coupling to the transport system. The chain is Arabinose import ATP-binding protein AraG 1 from Burkholderia ambifaria (strain ATCC BAA-244 / DSM 16087 / CCUG 44356 / LMG 19182 / AMMD) (Burkholderia cepacia (strain AMMD)).